A 240-amino-acid chain; its full sequence is NADH-quinone oxidoreductase subunit C (240 aa).

The segment at 1–82 (MSEEEKPKPK…PVDENRDPEP (82 aa)) is disordered. A compositionally biased stretch (low complexity) spans 11–20 (LSPALAAKMA). Positions 67-82 (DKPKAEPVDENRDPEP) are enriched in basic and acidic residues.

Belongs to the complex I 30 kDa subunit family. As to quaternary structure, NDH-1 is composed of 14 different subunits. Subunits NuoB, C, D, E, F, and G constitute the peripheral sector of the complex.

It is found in the cell inner membrane. The enzyme catalyses a quinone + NADH + 5 H(+)(in) = a quinol + NAD(+) + 4 H(+)(out). NDH-1 shuttles electrons from NADH, via FMN and iron-sulfur (Fe-S) centers, to quinones in the respiratory chain. The immediate electron acceptor for the enzyme in this species is believed to be a menaquinone. Couples the redox reaction to proton translocation (for every two electrons transferred, four hydrogen ions are translocated across the cytoplasmic membrane), and thus conserves the redox energy in a proton gradient. This Chloroherpeton thalassium (strain ATCC 35110 / GB-78) protein is NADH-quinone oxidoreductase subunit C.